Here is a 157-residue protein sequence, read N- to C-terminus: Mannose-specific lectin (157 aa).

Positions 1 to 19 form a signal peptide, or 23; in 70% of the molecules; that stretch reads MAKASLLILAAIFLGVITP. A Bulb-type lectin domain is found at 24 to 132; sequence DNILYSGETL…DRWATGTHTG (109 aa). 22 residues coordinate alpha-D-mannopyranose: Q49, D51, N53, Y57, D60, K61, W64, A65, N67, Q80, D82, N84, Y88, I95, W96, N99, N106, Q112, D114, N116, Y120, and W125. Residues C52 and C75 are joined by a disulfide bond. The propeptide at 129-157 is removed in mature form; sequence THTGLVGIPASPPSEKYPTAGKIKLVTAK.

In terms of assembly, homotetramer.

The protein resides in the secreted. Functionally, mannose-specific lectin which binds alpha-D-linked mannose. Displays a high affinity for alpha-(1-3)-mannose oligomers. Displays antiviral activity and therefore may contribute to defense against infections. The protein is Mannose-specific lectin of Galanthus nivalis (Common snowdrop).